A 458-amino-acid chain; its full sequence is UDP-N-acetylmuramoylalanine--D-glutamate ligase (458 aa).

124-130 lines the ATP pocket; it reads GSDGKTT.

It belongs to the MurCDEF family.

It is found in the cytoplasm. The catalysed reaction is UDP-N-acetyl-alpha-D-muramoyl-L-alanine + D-glutamate + ATP = UDP-N-acetyl-alpha-D-muramoyl-L-alanyl-D-glutamate + ADP + phosphate + H(+). It functions in the pathway cell wall biogenesis; peptidoglycan biosynthesis. In terms of biological role, cell wall formation. Catalyzes the addition of glutamate to the nucleotide precursor UDP-N-acetylmuramoyl-L-alanine (UMA). In Clostridium beijerinckii (strain ATCC 51743 / NCIMB 8052) (Clostridium acetobutylicum), this protein is UDP-N-acetylmuramoylalanine--D-glutamate ligase.